The sequence spans 1069 residues: Protocadherin-8 (1069 aa).

The N-terminal stretch at 1–29 (MSPVKRWGSPCLFPLQLFSLCWVLSVAQS) is a signal peptide. Cadherin domains are found at residues 30 to 135 (KTVR…APRF), 136 to 245 (PRAQ…SPAF), 247 to 354 (QGAV…APDI), 393 to 497 (QETG…APLF), 498 to 609 (TKPV…SPVL), and 615 to 721 (ANGS…VPAS). Topologically, residues 30–747 (KTVRYSTFEE…SGPSLQWDTP (718 aa)) are extracellular. Asn616 is a glycosylation site (N-linked (GlcNAc...) asparagine). The segment at 719–738 (PASAGSPEHFRPPGSRLAPS) is disordered. The helical transmembrane segment at 748–768 (LIVIIVLAGSCTLLLAAIIAI) threads the bilayer. At 769–1069 (ATTCNRRKKE…SPKKGTNENV (301 aa)) the chain is on the cytoplasmic side. 3 disordered regions span residues 777 to 859 (KEVR…TGES), 905 to 927 (REAE…DSDS), and 1031 to 1069 (LSPP…NENV). 2 stretches are compositionally biased toward basic and acidic residues: residues 780–790 (RKGGALREERP) and 905–920 (REAE…KGDS). Ser1052 carries the phosphoserine modification.

The N-terminal extracellular domain forms homophilic interactions; these interactions activate p38 MAPK via TAOK2 and trigger endocytosis. Interacts with CDH2; this interaction may lead to CDH2 cointernalization. Interacts with CDH11. Interacts with TAOK2. As to expression, enriched in brain relative to peripheral tissues, with low expression in the testis. Expressed in hippocampal neurons (at protein level).

The protein localises to the cell membrane. It localises to the cell projection. It is found in the dendrite. Its subcellular location is the presynaptic cell membrane. The protein resides in the postsynaptic cell membrane. Its function is as follows. Calcium-dependent cell-adhesion protein. May play a role in activity-induced synaptic reorganization underlying long term memory. Could be involved in CDH2 internalization through TAOK2/p38 MAPK pathway. In hippocampal neurons, may play a role in the down-regulation of dendritic spines, maybe through its action on CDH2 endocytosis. The sequence is that of Protocadherin-8 (Pcdh8) from Rattus norvegicus (Rat).